The chain runs to 183 residues: Peptidyl-tRNA hydrolase (183 aa).

Residue Tyr-14 participates in tRNA binding. His-19 acts as the Proton acceptor in catalysis. The tRNA site is built by Tyr-64, Asn-66, and Asn-112.

The protein belongs to the PTH family. In terms of assembly, monomer.

The protein localises to the cytoplasm. The catalysed reaction is an N-acyl-L-alpha-aminoacyl-tRNA + H2O = an N-acyl-L-amino acid + a tRNA + H(+). In terms of biological role, hydrolyzes ribosome-free peptidyl-tRNAs (with 1 or more amino acids incorporated), which drop off the ribosome during protein synthesis, or as a result of ribosome stalling. Catalyzes the release of premature peptidyl moieties from peptidyl-tRNA molecules trapped in stalled 50S ribosomal subunits, and thus maintains levels of free tRNAs and 50S ribosomes. In Anaplasma phagocytophilum (strain HZ), this protein is Peptidyl-tRNA hydrolase.